A 388-amino-acid chain; its full sequence is Mannitol-1-phosphate 5-dehydrogenase (388 aa).

An NAD(+)-binding site is contributed by 5-16 (AVHFGGGNIGRG). Residue K213 is part of the active site.

This sequence belongs to the mannitol dehydrogenase family. Monomer.

It carries out the reaction D-mannitol 1-phosphate + NAD(+) = beta-D-fructose 6-phosphate + NADH + H(+). Its function is as follows. Catalyzes the NAD(H)-dependent interconversion of D-fructose 6-phosphate and D-mannitol 1-phosphate in the mannitol metabolic pathway. The chain is Mannitol-1-phosphate 5-dehydrogenase from Penicillium rubens (strain ATCC 28089 / DSM 1075 / NRRL 1951 / Wisconsin 54-1255) (Penicillium chrysogenum).